Reading from the N-terminus, the 193-residue chain is Thioredoxin M4, chloroplastic (193 aa).

A chloroplast-targeting transit peptide spans 1–82 (MASLLDSVTV…RIACEAQDTT (82 aa)). The Thioredoxin domain maps to 83 to 192 (AAAVEVPNLS…LEKTIERFLV (110 aa)). Catalysis depends on nucleophile residues Cys116 and Cys119. A disulfide bridge links Cys116 with Cys119.

This sequence belongs to the thioredoxin family. Plant M-type subfamily.

The protein resides in the plastid. It is found in the chloroplast stroma. Functionally, thiol-disulfide oxidoreductase involved in the redox regulation of enzyme of the oxidative pentose phosphate pathway. Under reducing conditions, inhibits the glucose-6-phosphate dehydrogenase. The polypeptide is Thioredoxin M4, chloroplastic (Arabidopsis thaliana (Mouse-ear cress)).